A 620-amino-acid polypeptide reads, in one-letter code: MYND-type zinc finger protein MUB1 (620 aa).

The MYND-type; degenerate zinc finger occupies 514–555 (NFSCGKWEDFPRQFAKCRRCKRTKYCSRKCQLKAWGYHRYWC). Cysteine 530, cysteine 533, histidine 551, and cysteine 555 together coordinate Zn(2+). The span at 563 to 606 (MRSTNTTTGVNTPNEPSSLNATATTAADVSNSTSTFTPNISTTV) shows a compositional bias: polar residues. The segment at 563-620 (MRSTNTTTGVNTPNEPSSLNATATTAADVSNSTSTFTPNISTTVPDEISNRDENSIPE) is disordered. A compositionally biased stretch (basic and acidic residues) spans 610–620 (ISNRDENSIPE).

Belongs to the MUB1/samB family. Interacts with UBR2 and RPN4.

The protein resides in the cytoplasm. Involved in the determination of the onset of polarized growth. Required for the ubiquitin-dependent degradation of RPN4. Cooperates with UBR2 to transfer ubiquitin from RAD6 to RPN4. The chain is MYND-type zinc finger protein MUB1 (MUB1) from Saccharomyces cerevisiae (strain ATCC 204508 / S288c) (Baker's yeast).